Here is a 1021-residue protein sequence, read N- to C-terminus: Receptor-like protein EIX2 (1021 aa).

The signal sequence occupies residues 1-24; it reads MGKRTNPRHFLVTWSLLLLETAFG. The segment at 25–109 is N-cap; that stretch reads LTSREVNKTL…PILTGKVSPS (85 aa). Over 25 to 963 the chain is Extracellular; sequence LTSREVNKTL…DDDDEFSSLE (939 aa). The N-linked (GlcNAc...) asparagine glycan is linked to asparagine 31. 6 LRR repeats span residues 113–136, 138–161, 162–184, 186–211, 214–237, and 239–262; these read LEYL…RFIG, LKRL…QFQN, LTSL…VWLS, LSSL…ITKV, LKEL…VANS, and LISL…SWLF. Asparagine 145 and asparagine 161 each carry an N-linked (GlcNAc...) asparagine glycan. Asparagine 236 carries an N-linked (GlcNAc...) asparagine glycan. The N-linked (GlcNAc...) asparagine glycan is linked to asparagine 263. LRR repeat units follow at residues 265-288, 290-313, 314-337, 342-365, 366-388, 389-412, 413-436, 437-459, 461-483, 484-507, 509-532, 533-555, 557-581, and 583-607; these read STSL…RFGS, MYLE…SFGN, LTRL…LFLR, RKSL…VTRF, SSLK…RVGQ, VSSL…LALF, PSLR…IGKL, SQLR…MGQL, NLER…HFSN, LSSL…DWVP, FQLQ…LQTQ, NNYT…WFSN, PPEL…IVSK, and DYMI…NIQI. Asparagine 313 carries an N-linked (GlcNAc...) asparagine glycan. N-linked (GlcNAc...) asparagine glycosylation occurs at asparagine 483. Asparagine 534, asparagine 544, asparagine 564, and asparagine 593 each carry an N-linked (GlcNAc...) asparagine glycan. An LRR 21; degenerate repeat occupies 608–626; the sequence is FYLHKNHFSGSISSICRNT. 6 LRR repeats span residues 627–651, 652–675, 677–698, 699–722, 723–747, and 749–773; these read IGAA…WMNM, SNLA…LGSL, NLEA…FSQC, QLLQ…IGTD, LLQL…ICQL, and FLQI…NFTI. Asparagine 650 and asparagine 663 each carry an N-linked (GlcNAc...) asparagine glycan. Asparagine 770 and asparagine 778 each carry an N-linked (GlcNAc...) asparagine glycan. LRR repeat units lie at residues 818–842, 843–866, 867–890, and 892–913; these read LLYL…IAEM, RGLR…IGQM, KLLE…LSNL, and FLSV…STQL. Residues asparagine 849, asparagine 856, and asparagine 889 are each glycosylated (N-linked (GlcNAc...) asparagine). A C-cap/acidic domain region spans residues 914-963; sequence QSFDRSSYSGNAQLCGPPLEECPGYAPPIDRGSNTNPQEHDDDDEFSSLE. A helical transmembrane segment spans residues 964–984; it reads FYVSMVLGFFVTFWGILGCLI. The Cytoplasmic portion of the chain corresponds to 985–1021; the sequence is VNRSWRNAYFTFLTDMKSWLHMTSRVCFARLKGKLRN.

It belongs to the RLP family. As to quaternary structure, interacts with EIX elicitor protein.

The protein resides in the cell membrane. Involved in plant defense. Confers resistance to the fungal pathogen T.viride through recognition of the EIX elicitor protein. This is Receptor-like protein EIX2 from Solanum lycopersicum (Tomato).